Consider the following 452-residue polypeptide: UDP-N-acetylmuramoylalanine--D-glutamate ligase (452 aa).

119-125 (GSNGKTT) contacts ATP.

This sequence belongs to the MurCDEF family.

The protein localises to the cytoplasm. It catalyses the reaction UDP-N-acetyl-alpha-D-muramoyl-L-alanine + D-glutamate + ATP = UDP-N-acetyl-alpha-D-muramoyl-L-alanyl-D-glutamate + ADP + phosphate + H(+). Its pathway is cell wall biogenesis; peptidoglycan biosynthesis. Cell wall formation. Catalyzes the addition of glutamate to the nucleotide precursor UDP-N-acetylmuramoyl-L-alanine (UMA). This chain is UDP-N-acetylmuramoylalanine--D-glutamate ligase, found in Streptococcus pyogenes serotype M5 (strain Manfredo).